Here is a 270-residue protein sequence, read N- to C-terminus: Regulatory protein RecX (270 aa).

The protein belongs to the RecX family.

It is found in the cytoplasm. In terms of biological role, modulates RecA activity. The protein is Regulatory protein RecX of Bacillus cereus (strain ZK / E33L).